We begin with the raw amino-acid sequence, 322 residues long: DNA repair and recombination protein RadA (322 aa).

105-112 is an ATP binding site; the sequence is GMFGSGKT.

The protein belongs to the eukaryotic RecA-like protein family.

Its function is as follows. Involved in DNA repair and in homologous recombination. Binds and assemble on single-stranded DNA to form a nucleoprotein filament. Hydrolyzes ATP in a ssDNA-dependent manner and promotes DNA strand exchange between homologous DNA molecules. The chain is DNA repair and recombination protein RadA from Methanococcus maripaludis (Methanococcus deltae).